The following is a 156-amino-acid chain: Small ribosomal subunit protein uS7c (156 aa).

The protein belongs to the universal ribosomal protein uS7 family. Part of the 30S ribosomal subunit.

Its subcellular location is the plastid. The protein resides in the chloroplast. Functionally, one of the primary rRNA binding proteins, it binds directly to 16S rRNA where it nucleates assembly of the head domain of the 30S subunit. The protein is Small ribosomal subunit protein uS7c (rps7) of Tupiella akineta (Green alga).